Here is a 451-residue protein sequence, read N- to C-terminus: Glucose-6-phosphate isomerase (451 aa).

Glutamate 291 serves as the catalytic Proton donor. Residues histidine 312 and lysine 426 contribute to the active site.

The protein belongs to the GPI family.

It is found in the cytoplasm. It catalyses the reaction alpha-D-glucose 6-phosphate = beta-D-fructose 6-phosphate. It functions in the pathway carbohydrate biosynthesis; gluconeogenesis. The protein operates within carbohydrate degradation; glycolysis; D-glyceraldehyde 3-phosphate and glycerone phosphate from D-glucose: step 2/4. Functionally, catalyzes the reversible isomerization of glucose-6-phosphate to fructose-6-phosphate. This is Glucose-6-phosphate isomerase from Thermoanaerobacter sp. (strain X514).